Consider the following 992-residue polypeptide: Exportin-T (992 aa).

This sequence belongs to the exportin family.

The protein resides in the nucleus. It localises to the cytoplasm. Its function is as follows. tRNA nucleus export receptor which facilitates tRNA translocation across the nuclear pore complex. Involved in pre-tRNA splicing, probably by affecting the interaction of pre-tRNA with splicing endonuclease. The polypeptide is Exportin-T (LOS1) (Scheffersomyces stipitis (strain ATCC 58785 / CBS 6054 / NBRC 10063 / NRRL Y-11545) (Yeast)).